We begin with the raw amino-acid sequence, 394 residues long: Chorismate synthase (394 aa).

Arg-48 contacts NADP(+). The segment at Gln-52–Ala-90 is disordered. Over residues Ser-66–Thr-79 the composition is skewed to polar residues. Residues Arg-125–Ser-127, Gly-297, His-312–Ser-316, and Arg-339 contribute to the FMN site.

It belongs to the chorismate synthase family. FMNH2 serves as cofactor.

The catalysed reaction is 5-O-(1-carboxyvinyl)-3-phosphoshikimate = chorismate + phosphate. Its pathway is metabolic intermediate biosynthesis; chorismate biosynthesis; chorismate from D-erythrose 4-phosphate and phosphoenolpyruvate: step 7/7. Functionally, catalyzes the anti-1,4-elimination of the C-3 phosphate and the C-6 proR hydrogen from 5-enolpyruvylshikimate-3-phosphate (EPSP) to yield chorismate, which is the branch point compound that serves as the starting substrate for the three terminal pathways of aromatic amino acid biosynthesis. This reaction introduces a second double bond into the aromatic ring system. The chain is Chorismate synthase from Halobacterium salinarum (strain ATCC 700922 / JCM 11081 / NRC-1) (Halobacterium halobium).